We begin with the raw amino-acid sequence, 120 residues long: NADH-ubiquinone oxidoreductase chain 3 (120 aa).

A run of 3 helical transmembrane segments spans residues 7–27 (FVYI…LFFL), 62–82 (FYLV…LFPF), and 89–109 (MTLL…IGFI).

It belongs to the complex I subunit 3 family.

Its subcellular location is the mitochondrion membrane. It carries out the reaction a ubiquinone + NADH + 5 H(+)(in) = a ubiquinol + NAD(+) + 4 H(+)(out). In terms of biological role, core subunit of the mitochondrial membrane respiratory chain NADH dehydrogenase (Complex I) that is believed to belong to the minimal assembly required for catalysis. Complex I functions in the transfer of electrons from NADH to the respiratory chain. The immediate electron acceptor for the enzyme is believed to be ubiquinone. This Dictyostelium discoideum (Social amoeba) protein is NADH-ubiquinone oxidoreductase chain 3 (nad3).